The primary structure comprises 83 residues: Small ribosomal subunit protein uS17 (83 aa).

Belongs to the universal ribosomal protein uS17 family. Part of the 30S ribosomal subunit.

Functionally, one of the primary rRNA binding proteins, it binds specifically to the 5'-end of 16S ribosomal RNA. The protein is Small ribosomal subunit protein uS17 of Pseudoalteromonas atlantica (strain T6c / ATCC BAA-1087).